Here is a 137-residue protein sequence, read N- to C-terminus: ATP synthase epsilon chain (137 aa).

It belongs to the ATPase epsilon chain family. As to quaternary structure, F-type ATPases have 2 components, CF(1) - the catalytic core - and CF(0) - the membrane proton channel. CF(1) has five subunits: alpha(3), beta(3), gamma(1), delta(1), epsilon(1). CF(0) has three main subunits: a, b and c.

The protein localises to the cell membrane. Its function is as follows. Produces ATP from ADP in the presence of a proton gradient across the membrane. This is ATP synthase epsilon chain from Streptococcus agalactiae serotype III (strain NEM316).